Reading from the N-terminus, the 503-residue chain is Mitogen-activated protein kinase kinae mkk2 (503 aa).

The disordered stretch occupies residues 1-130; sequence MSSSPVPLLR…ASGPASASSS (130 aa). The segment covering 53-66 has biased composition (pro residues); that stretch reads APQPQRPSTRPAPP. Over residues 100 to 115 the composition is skewed to polar residues; that stretch reads TGLNESTGHSRSSSFT. Over residues 121–130 the composition is skewed to low complexity; it reads ASGPASASSS. A Protein kinase domain is found at 211 to 481; the sequence is IIELGSLGEG…PWRMLEHPWM (271 aa). ATP contacts are provided by residues 217–225 and Lys-240; that span reads LGEGAGGAV. Residue Asp-338 is the Proton acceptor of the active site.

This sequence belongs to the protein kinase superfamily. STE Ser/Thr protein kinase family. MAP kinase kinase subfamily.

It carries out the reaction L-seryl-[protein] + ATP = O-phospho-L-seryl-[protein] + ADP + H(+). The enzyme catalyses L-threonyl-[protein] + ATP = O-phospho-L-threonyl-[protein] + ADP + H(+). Functionally, mitogen-activated kinase kinase (MAPKK), part of the cell wall integrity (CWI) signaling pathway composed by three protein kinases bck1, mkk2 and mpkA and responsible for the maintaining of cell-wall integrity balance. The CWI pathway also regulates the oxidative stress response, as well as the production of some secondary metabolites including pyomelanin. The protein is Mitogen-activated protein kinase kinae mkk2 of Aspergillus fumigatus (strain CBS 144.89 / FGSC A1163 / CEA10) (Neosartorya fumigata).